Here is a 72-residue protein sequence, read N- to C-terminus: Lantibiotic Flvbeta.e (72 aa).

Positions 1–34 are cleaved as a propeptide — cleaved by FlvT; that stretch reads MNNKEFNMEQFKKLAAVVSEDELDEMLDENVTGA. The segment at residues 36-40 is a cross-link (lanthionine (Ser-Cys); by FlvM2); the sequence is SSIPC. The residue at position 37 (Ser37) is a 2,3-didehydroalanine (Ser); by FlvM2. 2,3-didehydrobutyrine; by FlvM2 is present on residues Thr48 and Thr49. 3 consecutive cross-links (beta-methyllanthionine (Thr-Cys); by FlvM2) follow at residues 55-61, 63-66, and 67-70; these read TTGFDWC, TGAC, and TTSC.

Post-translationally, contains LL-lanthionine and DL-beta-methyllanthionine, when coepressed in E.coli with the flavecin synthetase FlvM2.

Its subcellular location is the secreted. Its function is as follows. Lanthionine-containing peptide antibiotic (lantibiotic) that is probably active on Gram-positive bacteria, since its analog [Del1]Flvbeta.e shows antibacterial activity against Gram-positive bacteria. This activity is not synergistically enhanced by [Del2]Flvalpha.a, an analog of Flvalpha.a, which is encoded by the same operon than Flvbeta.e. The bactericidal activity of lantibiotics is based on depolarization of energized bacterial cytoplasmic membranes, initiated by the formation of aqueous transmembrane pores. The chain is Lantibiotic Flvbeta.e from Ruminococcus flavefaciens.